Here is a 211-residue protein sequence, read N- to C-terminus: Urease accessory protein UreG (211 aa).

13 to 20 (GPVGSGKT) contacts GTP.

It belongs to the SIMIBI class G3E GTPase family. UreG subfamily. Homodimer. UreD, UreF and UreG form a complex that acts as a GTP-hydrolysis-dependent molecular chaperone, activating the urease apoprotein by helping to assemble the nickel containing metallocenter of UreC. The UreE protein probably delivers the nickel.

It localises to the cytoplasm. In terms of biological role, facilitates the functional incorporation of the urease nickel metallocenter. This process requires GTP hydrolysis, probably effectuated by UreG. The sequence is that of Urease accessory protein UreG from Alkalilimnicola ehrlichii (strain ATCC BAA-1101 / DSM 17681 / MLHE-1).